We begin with the raw amino-acid sequence, 149 residues long: Calmodulin (149 aa).

Alanine 2 bears the N-acetylalanine mark. 4 consecutive EF-hand domains span residues 8–43 (EQIAEFKEAFSLFDKDGDGTITTKELGTVMRSLGQN), 44–79 (PTEAELQDMINEVDADGDGTIDFPEFLTMMARKMKD), 81–116 (DSEEEIREAFRVFDKDGNGFISAAELRHVMTNLGEK), and 117–149 (LTDEEVDEMIREADIDGDGQVNYEEFVTMMTSK). Residues aspartate 21, aspartate 23, aspartate 25, threonine 27, glutamate 32, aspartate 57, aspartate 59, aspartate 61, threonine 63, glutamate 68, aspartate 94, aspartate 96, asparagine 98, and glutamate 105 each coordinate Ca(2+). The residue at position 116 (lysine 116) is an N6,N6,N6-trimethyllysine. Positions 130, 132, 134, 136, and 141 each coordinate Ca(2+).

The protein belongs to the calmodulin family.

Calmodulin mediates the control of a large number of enzymes, ion channels and other proteins by Ca(2+). Among the enzymes to be stimulated by the calmodulin-Ca(2+) complex are a number of protein kinases and phosphatases. This is Calmodulin from Pyuridae sp. (Sea squirt).